We begin with the raw amino-acid sequence, 945 residues long: Isoleucine--tRNA ligase (945 aa).

A 'HIGH' region motif is present at residues 66 to 76; the sequence is PYANGDIHLGH. E581 contributes to the L-isoleucyl-5'-AMP binding site. The 'KMSKS' region signature appears at 622–626; sequence KMSKS. An ATP-binding site is contributed by K625. C908, C911, C928, and C931 together coordinate Zn(2+).

This sequence belongs to the class-I aminoacyl-tRNA synthetase family. IleS type 1 subfamily. In terms of assembly, monomer. The cofactor is Zn(2+).

The protein localises to the cytoplasm. The enzyme catalyses tRNA(Ile) + L-isoleucine + ATP = L-isoleucyl-tRNA(Ile) + AMP + diphosphate. Functionally, catalyzes the attachment of isoleucine to tRNA(Ile). As IleRS can inadvertently accommodate and process structurally similar amino acids such as valine, to avoid such errors it has two additional distinct tRNA(Ile)-dependent editing activities. One activity is designated as 'pretransfer' editing and involves the hydrolysis of activated Val-AMP. The other activity is designated 'posttransfer' editing and involves deacylation of mischarged Val-tRNA(Ile). This Burkholderia cenocepacia (strain HI2424) protein is Isoleucine--tRNA ligase.